Reading from the N-terminus, the 147-residue chain is Large ribosomal subunit protein uL13 (147 aa).

It belongs to the universal ribosomal protein uL13 family. As to quaternary structure, part of the 50S ribosomal subunit.

In terms of biological role, this protein is one of the early assembly proteins of the 50S ribosomal subunit, although it is not seen to bind rRNA by itself. It is important during the early stages of 50S assembly. In Mycobacterium marinum (strain ATCC BAA-535 / M), this protein is Large ribosomal subunit protein uL13.